Here is a 161-residue protein sequence, read N- to C-terminus: Allophycocyanin subunit alpha-B (161 aa).

Asn71 is subject to N4-methylasparagine. Cys81 lines the (2R,3E)-phycocyanobilin pocket.

It belongs to the phycobiliprotein family. In terms of assembly, heterohexamer of two alpha chains, one alpha-B chain and three beta chains. In terms of processing, contains one covalently linked phycocyanobilin chromophore. The chromophore is added by phycocyanobilin lyase CpcS 1.

The protein localises to the cellular thylakoid membrane. Functionally, light-harvesting photosynthetic bile pigment-protein from the phycobiliprotein complex. Allophycocyanin has a maximum absorption at approximately 654 nanometers. The protein is Allophycocyanin subunit alpha-B (apcD) of Nostoc sp. (strain PCC 7120 / SAG 25.82 / UTEX 2576).